Here is a 171-residue protein sequence, read N- to C-terminus: MSSEEQEDVDEDIQYFVRIGQTDLDGTKTVERALAELGGVGRRVARIVADEAGVDRTATMGGLEDDAIESVTDAVDSFTEHAPAWLANRQNDFYTGENQHITGTDVELTRDQDINRMRMIRSYKGIRHERGQKVRGQRTKSTGRTEGTIGVNVEAIKEEQAEDDAADGGEE.

Residues 128–171 form a disordered region; the sequence is HERGQKVRGQRTKSTGRTEGTIGVNVEAIKEEQAEDDAADGGEE. Residues 160 to 171 are compositionally biased toward acidic residues; sequence QAEDDAADGGEE.

This sequence belongs to the universal ribosomal protein uS13 family. Part of the 30S ribosomal subunit. Forms a loose heterodimer with protein S19. Forms two bridges to the 50S subunit in the 70S ribosome.

Its function is as follows. Located at the top of the head of the 30S subunit, it contacts several helices of the 16S rRNA. In the 70S ribosome it contacts the 23S rRNA (bridge B1a) and protein L5 of the 50S subunit (bridge B1b), connecting the 2 subunits; these bridges are implicated in subunit movement. This chain is Small ribosomal subunit protein uS13, found in Halobacterium salinarum (strain ATCC 700922 / JCM 11081 / NRC-1) (Halobacterium halobium).